The chain runs to 628 residues: Patulin synthase (628 aa).

Positions 1–19 (MRLTSGIFHAAIAVAAVGA) are cleaved as a signal peptide. Asn49 is a glycosylation site (N-linked (GlcNAc...) asparagine). Residues 61-62 (TA) and 82-83 (EA) contribute to the FAD site. An N-linked (GlcNAc...) asparagine glycan is attached at Asn93. FAD is bound at residue 148–151 (NYMA). N-linked (GlcNAc...) asparagine glycosylation is found at Asn198, Asn261, Asn283, Asn429, Asn486, and Asn526. The active-site Proton acceptor is the His564. Asn575 carries an N-linked (GlcNAc...) asparagine glycan. FAD is bound by residues Ala598 and 609 to 610 (PQ).

This sequence belongs to the GMC oxidoreductase family. Requires FAD as cofactor.

The protein resides in the cytoplasm. It localises to the cell cortex. The protein localises to the vacuole. It is found in the secreted. Its subcellular location is the cell wall. The enzyme catalyses (E)-ascladiol + A = patulin + AH2. Its pathway is mycotoxin biosynthesis; patulin biosynthesis. Functionally, patulin synthase; part of the gene cluster that mediates the biosynthesis of patulin, an acetate-derived tetraketide mycotoxin produced by several fungal species that shows antimicrobial properties against several bacteria. PatE catalyzes the last step of the pathway which is the conversion of E-ascladiol to patulin. The pathway begins with the synthesis of 6-methylsalicylic acid by the polyketide synthase (PKS) patK via condensation of acetate and malonate units. The 6-methylsalicylic acid decarboxylase patG then catalyzes the decarboxylation of 6-methylsalicylic acid to yield m-cresol (also known as 3-methylphenol). These first reactions occur in the cytosol. The intermediate m-cresol is then transported into the endoplasmic reticulum where the cytochrome P450 monooxygenase patH converts it to m-hydroxybenzyl alcohol, which is further converted to gentisyl alcohol by the cytochrome P450 monooxygenase patI. The oxidoreductases patJ and patO further convert gentisyl alcohol to isoepoxydon in the vacuole. PatN catalyzes then the transformation of isoepoxydon into phyllostine. The cluster protein patF is responsible for the conversion from phyllostine to neopatulin whereas the alcohol dehydrogenase patD converts neopatulin to E-ascladiol. The steps between isoepoxydon and E-ascladiol occur in the cytosol, and E-ascladiol is probably secreted to the extracellular space by one of the cluster-specific transporters patC or patM. Finally, the secreted patulin synthase patE catalyzes the conversion of E-ascladiol to patulin. In Penicillium expansum (Blue mold rot fungus), this protein is Patulin synthase.